The primary structure comprises 288 residues: 4-diphosphocytidyl-2-C-methyl-D-erythritol kinase (288 aa).

Lys8 is a catalytic residue. Residue 90-100 (PVGAGLAGGSS) participates in ATP binding. Residue Asp132 is part of the active site.

It belongs to the GHMP kinase family. IspE subfamily.

The catalysed reaction is 4-CDP-2-C-methyl-D-erythritol + ATP = 4-CDP-2-C-methyl-D-erythritol 2-phosphate + ADP + H(+). Its pathway is isoprenoid biosynthesis; isopentenyl diphosphate biosynthesis via DXP pathway; isopentenyl diphosphate from 1-deoxy-D-xylulose 5-phosphate: step 3/6. Its function is as follows. Catalyzes the phosphorylation of the position 2 hydroxy group of 4-diphosphocytidyl-2C-methyl-D-erythritol. The polypeptide is 4-diphosphocytidyl-2-C-methyl-D-erythritol kinase (Chlamydia trachomatis serovar L2b (strain UCH-1/proctitis)).